The primary structure comprises 438 residues: Ribosomal protein uS12 methylthiotransferase RimO (438 aa).

Residues 6–118 (KQLCLISLGC…IDILIAKKQN (113 aa)) enclose the MTTase N-terminal domain. The [4Fe-4S] cluster site is built by Cys-15, Cys-49, Cys-81, Cys-150, Cys-154, and Cys-157. In terms of domain architecture, Radical SAM core spans 136-364 (TGSSVHAYVK…NKIALKHQHN (229 aa)).

Belongs to the methylthiotransferase family. RimO subfamily. [4Fe-4S] cluster is required as a cofactor.

The protein localises to the cytoplasm. It catalyses the reaction L-aspartate(89)-[ribosomal protein uS12]-hydrogen + (sulfur carrier)-SH + AH2 + 2 S-adenosyl-L-methionine = 3-methylsulfanyl-L-aspartate(89)-[ribosomal protein uS12]-hydrogen + (sulfur carrier)-H + 5'-deoxyadenosine + L-methionine + A + S-adenosyl-L-homocysteine + 2 H(+). Its function is as follows. Catalyzes the methylthiolation of an aspartic acid residue of ribosomal protein uS12. In Helicobacter acinonychis (strain Sheeba), this protein is Ribosomal protein uS12 methylthiotransferase RimO.